Reading from the N-terminus, the 329-residue chain is 2-oxoglutarate-dependent dioxygenase mpl2 (329 aa).

Residues 183–288 form the Fe2OG dioxygenase domain; sequence PACPLRLLHY…RYSVVFFFDG (106 aa). Fe cation-binding residues include His211, Asp213, and His269. Arg279 serves as a coordination point for 2-oxoglutarate.

Belongs to the iron/ascorbate-dependent oxidoreductase family. It depends on Fe(2+) as a cofactor.

The protein operates within mycotoxin biosynthesis. In terms of biological role, 2-oxoglutarate-dependent dioxygenase; part of the gene cluster that mediates the biosynthesis of the mycotoxin citrinin, a hepato-nephrotoxic compound to humans due to inhibition of respiration complex III. The pathway begins with the synthesis of a keto-aldehyde intermediate by the citrinin PKS (pksCT) from successive condensations of 4 malonyl-CoA units, presumably with a simple acetyl-CoA starter unit. Release of the keto-aldehyde intermediate is consistent with the presence of the C-terminal reductive release domain. Mp11 collaborates with pksCT by catalyzing the hydrolysis of ACP-bound acyl intermediates to free the ACP from stalled intermediates. Mpl2 then catalyzes the oxidation of the C-12 methyl of the ketone intermediate to an alcohol intermediate which is further oxidized by the oxidoreductase mpl7 to produce a bisaldehyde intermediate. The fourth catalytic step is catalyzed by the mpl4 aldehyde dehydrogenase. The final transformation is the reduction of C-3 by mpl6 to provide the chemically stable citrinin nucleus. This is 2-oxoglutarate-dependent dioxygenase mpl2 from Monascus purpureus (Red mold).